The chain runs to 499 residues: Anaerobic nitric oxide reductase flavorubredoxin (499 aa).

Residues 30–210 (TKGTSYNSYL…PFSALVTAKI (181 aa)) are zinc metallo-hydrolase. Fe cation-binding residues include His79, Glu81, Asp83, His147, Asp166, and His227. A Flavodoxin-like domain is found at 254 to 393 (ITLFYDSMSN…LCREHGQFIA (140 aa)). Residues 260–264 (SMSNN) and 342–369 (AFGS…ETAV) contribute to the FMN site. The Rubredoxin-like domain occupies 447–498 (KQCMLCTVCNWVYDPEIGEPNQGVEPNTAWIDVPDYFLCPECNLGKDVFVEV). Fe cation is bound by residues Cys452, Cys455, Cys485, and Cys488.

It in the N-terminal section; belongs to the zinc metallo-hydrolase group 3 family. Homotetramer. Fe cation serves as cofactor. It depends on FMN as a cofactor.

The protein resides in the cytoplasm. It participates in nitrogen metabolism; nitric oxide reduction. Anaerobic nitric oxide reductase; uses NADH to detoxify nitric oxide (NO), protecting several 4Fe-4S NO-sensitive enzymes. Has at least 2 reductase partners, only one of which (NorW, flavorubredoxin reductase) has been identified. NO probably binds to the di-iron center; electrons enter from the NorW at rubredoxin and are transferred sequentially to the FMN center and the di-iron center. Also able to function as an aerobic oxygen reductase. In Aliivibrio salmonicida (strain LFI1238) (Vibrio salmonicida (strain LFI1238)), this protein is Anaerobic nitric oxide reductase flavorubredoxin.